Here is a 240-residue protein sequence, read N- to C-terminus: NADH-quinone oxidoreductase subunit C (240 aa).

The interval 1–82 (MSEEEKPKPK…PVDENRDPEP (82 aa)) is disordered. A compositionally biased stretch (low complexity) spans 11–20 (LSPALAAKMA). Residues 67-82 (DKPKAEPVDENRDPEP) show a composition bias toward basic and acidic residues.

It belongs to the complex I 30 kDa subunit family. In terms of assembly, NDH-1 is composed of 14 different subunits. Subunits NuoB, C, D, E, F, and G constitute the peripheral sector of the complex.

The protein resides in the cell inner membrane. It catalyses the reaction a quinone + NADH + 5 H(+)(in) = a quinol + NAD(+) + 4 H(+)(out). Its function is as follows. NDH-1 shuttles electrons from NADH, via FMN and iron-sulfur (Fe-S) centers, to quinones in the respiratory chain. The immediate electron acceptor for the enzyme in this species is believed to be a menaquinone. Couples the redox reaction to proton translocation (for every two electrons transferred, four hydrogen ions are translocated across the cytoplasmic membrane), and thus conserves the redox energy in a proton gradient. This Chloroherpeton thalassium (strain ATCC 35110 / GB-78) protein is NADH-quinone oxidoreductase subunit C.